Consider the following 622-residue polypeptide: Low affinity potassium transport system protein Kup (622 aa).

Transmembrane regions (helical) follow at residues 9–29 (LPAI…TSPL), 49–69 (VFGF…IKYL), 103–123 (VIMG…TPAI), 137–157 (PQLD…LFMI), 165–185 (VGKL…VLGL), 213–233 (VSFI…ALYA), 247–267 (WFTV…ALLL), 276–296 (PFFL…AALA), 337–357 (IYIP…IVSF), 363–383 (LAAA…ILST), 396–416 (LVAL…SANL), and 419–439 (LLSG…IMTT).

Belongs to the HAK/KUP transporter (TC 2.A.72) family.

The protein resides in the cell inner membrane. The enzyme catalyses K(+)(in) + H(+)(in) = K(+)(out) + H(+)(out). Responsible for the low-affinity transport of potassium into the cell. Likely operates as a K(+):H(+) symporter. This Salmonella arizonae (strain ATCC BAA-731 / CDC346-86 / RSK2980) protein is Low affinity potassium transport system protein Kup.